The following is a 20-amino-acid chain: Unknown protein NF045 from 2D-PAGE (20 aa).

The protein is Unknown protein NF045 from 2D-PAGE of Naegleria fowleri (Brain eating amoeba).